Reading from the N-terminus, the 536-residue chain is Dual specificity calcium/calmodulin-dependent 3',5'-cyclic nucleotide phosphodiesterase 1B (536 aa).

Residues 1–20 (MELSPRSPPEMLEESDCPSP) form a disordered region. A phosphoserine mark is found at Ser7 and Ser15. 2 calmodulin-binding regions span residues 27 to 47 (PSKK…KQLE) and 118 to 141 (EKPK…MFRR). The PDEase domain occupies 146 to 503 (VGPTYSTAVL…QKWKERAASG (358 aa)). Residue His223 is the Proton donor of the active site. Residues His227, His263, Asp264, and Asp370 each contribute to the Zn(2+) site. Residue Asp264 coordinates Mg(2+). Disordered stretches follow at residues 447 to 474 (LADE…VGDP) and 494 to 536 (QKWK…GNLD). The span at 455 to 464 (KNQPSFQWRQ) shows a compositional bias: polar residues. 2 positions are modified to phosphoserine: Ser466 and Ser514.

Belongs to the cyclic nucleotide phosphodiesterase family. PDE1 subfamily. In terms of assembly, homodimer. The cofactor is Zn(2+). It depends on Mg(2+) as a cofactor.

It localises to the cytoplasm. It is found in the cytosol. It carries out the reaction a nucleoside 3',5'-cyclic phosphate + H2O = a nucleoside 5'-phosphate + H(+). The enzyme catalyses 3',5'-cyclic GMP + H2O = GMP + H(+). It catalyses the reaction 3',5'-cyclic AMP + H2O = AMP + H(+). Its activity is regulated as follows. Type I PDE are activated by the binding of calmodulin in the presence of Ca(2+). Functionally, cyclic nucleotide phosphodiesterase with a dual specificity for the second messengers cAMP and cGMP, which are key regulators of many important physiological processes. Has a preference for cGMP as a substrate. The chain is Dual specificity calcium/calmodulin-dependent 3',5'-cyclic nucleotide phosphodiesterase 1B from Homo sapiens (Human).